A 296-amino-acid polypeptide reads, in one-letter code: Phosphoribosylaminoimidazole-succinocarboxamide synthase (296 aa).

It belongs to the SAICAR synthetase family.

It carries out the reaction 5-amino-1-(5-phospho-D-ribosyl)imidazole-4-carboxylate + L-aspartate + ATP = (2S)-2-[5-amino-1-(5-phospho-beta-D-ribosyl)imidazole-4-carboxamido]succinate + ADP + phosphate + 2 H(+). The protein operates within purine metabolism; IMP biosynthesis via de novo pathway; 5-amino-1-(5-phospho-D-ribosyl)imidazole-4-carboxamide from 5-amino-1-(5-phospho-D-ribosyl)imidazole-4-carboxylate: step 1/2. In Thioalkalivibrio sulfidiphilus (strain HL-EbGR7), this protein is Phosphoribosylaminoimidazole-succinocarboxamide synthase.